Consider the following 299-residue polypeptide: Porphobilinogen deaminase (299 aa).

Cysteine 242 is subject to S-(dipyrrolylmethanemethyl)cysteine.

This sequence belongs to the HMBS family. As to quaternary structure, monomer. Dipyrromethane is required as a cofactor.

It carries out the reaction 4 porphobilinogen + H2O = hydroxymethylbilane + 4 NH4(+). It participates in porphyrin-containing compound metabolism; protoporphyrin-IX biosynthesis; coproporphyrinogen-III from 5-aminolevulinate: step 2/4. Functionally, tetrapolymerization of the monopyrrole PBG into the hydroxymethylbilane pre-uroporphyrinogen in several discrete steps. This chain is Porphobilinogen deaminase, found in Rickettsia typhi (strain ATCC VR-144 / Wilmington).